We begin with the raw amino-acid sequence, 233 residues long: Pyridoxal 5'-phosphate synthase subunit PdxT (233 aa).

61-63 (GES) provides a ligand contact to L-glutamine. The active-site Nucleophile is Cys93. Residues Arg127 and 163–164 (IR) contribute to the L-glutamine site. Catalysis depends on charge relay system residues His212 and Glu214.

Belongs to the glutaminase PdxT/SNO family. As to quaternary structure, in the presence of PdxS, forms a dodecamer of heterodimers. Only shows activity in the heterodimer.

It carries out the reaction aldehydo-D-ribose 5-phosphate + D-glyceraldehyde 3-phosphate + L-glutamine = pyridoxal 5'-phosphate + L-glutamate + phosphate + 3 H2O + H(+). The catalysed reaction is L-glutamine + H2O = L-glutamate + NH4(+). It participates in cofactor biosynthesis; pyridoxal 5'-phosphate biosynthesis. Catalyzes the hydrolysis of glutamine to glutamate and ammonia as part of the biosynthesis of pyridoxal 5'-phosphate. The resulting ammonia molecule is channeled to the active site of PdxS. This is Pyridoxal 5'-phosphate synthase subunit PdxT from Paenarthrobacter aurescens (strain TC1).